We begin with the raw amino-acid sequence, 1322 residues long: Myosin-1 (1322 aa).

One can recognise a Myosin motor domain in the interval 42 to 728 (AGVSDMTLLT…TLFALETMRD (687 aa)). 135 to 142 (GESGAGKT) serves as a coordination point for ATP. The residue at position 369 (Ser369) is a Phosphoserine. An actin-binding region spans residues 417–499 (VIGVLDIYGF…PGIFSALNDA (83 aa)). IQ domains are found at residues 732-752 (HNMA…REES) and 753-778 (ARRI…YGHQ). The 195-residue stretch at 786–980 (RRRFSLISMR…SGEPPTSVSR (195 aa)) folds into the TH1 domain. Disordered stretches follow at residues 966 to 1090 (IVSV…MPSY) and 1137 to 1162 (VQQL…ATPA). Composition is skewed to low complexity over residues 1000–1017 (SRPV…PTTT) and 1027–1056 (GGTA…ASGA). Polar residues-rich tracts occupy residues 1078 to 1087 (PATSAPSSGM) and 1137 to 1148 (VQQLGSSSTAQT). The SH3 domain maps to 1184-1243 (RRLPRYRALYDFETQEAGELPLRTGDIVELEEKEENGWWLVKKGSTEGWSPADYLELIAE). Positions 1246–1300 (AAKPRPPPPAKPASAKPAAAPARVSQSSVTSSWTPPDSHAAPVAVMPGMGDPGGF) are disordered. The span at 1257 to 1267 (PASAKPAAAPA) shows a compositional bias: low complexity. A compositionally biased stretch (polar residues) spans 1269 to 1280 (VSQSSVTSSWTP).

The protein belongs to the TRAFAC class myosin-kinesin ATPase superfamily. Myosin family. Phosphorylation of the TEDS site (Ser-369) is required for the polarization of the actin cytoskeleton. Phosphorylation probably activates the myosin-I ATPase activity.

Its subcellular location is the cytoplasm. It localises to the cytoskeleton. The protein resides in the actin patch. Type-I myosin implicated in the organization of the actin cytoskeleton. Required for proper actin cytoskeleton polarization. At the cell cortex, assembles in patch-like structures together with proteins from the actin-polymerizing machinery and promotes actin assembly. Functions as actin nucleation-promoting factor (NPF) for the Arp2/3 complex. The protein is Myosin-1 (MYO1) of Malassezia globosa (strain ATCC MYA-4612 / CBS 7966) (Dandruff-associated fungus).